The primary structure comprises 132 residues: DNA-directed RNA polymerase subunit omega (132 aa).

Residues 90-109 are disordered; the sequence is SSEAGGVLGTSSEEEGSSFD.

Belongs to the RNA polymerase subunit omega family. As to quaternary structure, the RNAP catalytic core consists of 2 alpha, 1 beta, 1 beta' and 1 omega subunit. When a sigma factor is associated with the core the holoenzyme is formed, which can initiate transcription.

The catalysed reaction is RNA(n) + a ribonucleoside 5'-triphosphate = RNA(n+1) + diphosphate. In terms of biological role, promotes RNA polymerase assembly. Latches the N- and C-terminal regions of the beta' subunit thereby facilitating its interaction with the beta and alpha subunits. This is DNA-directed RNA polymerase subunit omega from Bartonella henselae (strain ATCC 49882 / DSM 28221 / CCUG 30454 / Houston 1) (Rochalimaea henselae).